A 303-amino-acid chain; its full sequence is Aspartate carbamoyltransferase catalytic subunit (303 aa).

Residues R48 and T49 each coordinate carbamoyl phosphate. K76 serves as a coordination point for L-aspartate. The carbamoyl phosphate site is built by R98, H129, and Q132. L-aspartate-binding residues include R162 and R214. Carbamoyl phosphate is bound by residues A257 and P258.

This sequence belongs to the aspartate/ornithine carbamoyltransferase superfamily. ATCase family. In terms of assembly, heterododecamer (2C3:3R2) of six catalytic PyrB chains organized as two trimers (C3), and six regulatory PyrI chains organized as three dimers (R2).

The enzyme catalyses carbamoyl phosphate + L-aspartate = N-carbamoyl-L-aspartate + phosphate + H(+). Its pathway is pyrimidine metabolism; UMP biosynthesis via de novo pathway; (S)-dihydroorotate from bicarbonate: step 2/3. Its function is as follows. Catalyzes the condensation of carbamoyl phosphate and aspartate to form carbamoyl aspartate and inorganic phosphate, the committed step in the de novo pyrimidine nucleotide biosynthesis pathway. The sequence is that of Aspartate carbamoyltransferase catalytic subunit from Leuconostoc citreum (strain KM20).